Reading from the N-terminus, the 314-residue chain is Protein ATP1B4 (314 aa).

A compositionally biased stretch (polar residues) spans 1 to 17; that stretch reads MATTAGEQANYLQSADS. The tract at residues 1 to 37 is disordered; the sequence is MATTAGEQANYLQSADSMSDGRQHHPEEAGEKKQEEQ. Residues 1–69 lie on the Cytoplasmic side of the membrane; that stretch reads MATTAGEQAN…VLGRDKKSWA (69 aa). Basic and acidic residues predominate over residues 19–37; it reads SDGRQHHPEEAGEKKQEEQ. A helical membrane pass occupies residues 70–90; sequence LILLFYFILYCFLAGLFALCI. Topologically, residues 91 to 314 are extracellular; the sequence is YGLLATISPY…GRVAFTLHIG (224 aa). Cys160 and Cys179 are joined by a disulfide. The N-linked (GlcNAc...) asparagine glycan is linked to Asn188. Intrachain disulfides connect Cys189–Cys205 and Cys228–Cys287. Asn264 is a glycosylation site (N-linked (GlcNAc...) asparagine).

The protein belongs to the X(+)/potassium ATPases subunit beta family. As to quaternary structure, composed of two subunits: alpha (catalytic) and beta (accessory). In terms of processing, glycosylated. In terms of tissue distribution, expressed in skeletal muscle, liver, lung, kidney, heart, brain and skin.

It is found in the membrane. In terms of biological role, this is the non-catalytic component of the active enzyme, which catalyzes the hydrolysis of ATP coupled with the exchange of Na(+) and K(+) ions across the plasma membrane. This is Protein ATP1B4 (atp1b4) from Xenopus laevis (African clawed frog).